A 196-amino-acid polypeptide reads, in one-letter code: MIPVVIEQTSRGEASYDIYSRLLKDRIIMLTGPVEDNMANSIIAQLLFLDAQDNTKDIYLYVNTPGGSVSAGLAIVDTMNFIKSDVQTIVMGMAASMGTVIASSGTKGKRFMLPNAEYMIHQPMGGTGGGTQQTDMAIAAEHLLKTRNNLEQILADNSGQPIEKVHVDAERDNWMSAQETLEYGFIDEIMANNQLK.

Residue S96 is the Nucleophile of the active site. H121 is an active-site residue.

Belongs to the peptidase S14 family. As to quaternary structure, fourteen ClpP subunits assemble into 2 heptameric rings which stack back to back to give a disk-like structure with a central cavity, resembling the structure of eukaryotic proteasomes.

It is found in the cytoplasm. It catalyses the reaction Hydrolysis of proteins to small peptides in the presence of ATP and magnesium. alpha-casein is the usual test substrate. In the absence of ATP, only oligopeptides shorter than five residues are hydrolyzed (such as succinyl-Leu-Tyr-|-NHMec, and Leu-Tyr-Leu-|-Tyr-Trp, in which cleavage of the -Tyr-|-Leu- and -Tyr-|-Trp bonds also occurs).. In terms of biological role, cleaves peptides in various proteins in a process that requires ATP hydrolysis. Has a chymotrypsin-like activity. Plays a major role in the degradation of misfolded proteins. In Streptococcus salivarius, this protein is ATP-dependent Clp protease proteolytic subunit.